We begin with the raw amino-acid sequence, 406 residues long: Eukaryotic initiation factor 4A-I (406 aa).

A disordered region spans residues Met-1–Gly-21. Ser-2 is subject to N-acetylserine. Ser-4 is modified (phosphoserine). The Q motif motif lies at Asp-32 to Gln-60. The 172-residue stretch at Ile-63–Ile-234 folds into the Helicase ATP-binding domain. An ATP-binding site is contributed by Ala-76–Thr-83. Lys-118 carries the N6-acetyllysine modification. Residue Lys-146 forms a Glycyl lysine isopeptide (Lys-Gly) (interchain with G-Cter in SUMO2) linkage. At Thr-158 the chain carries Phosphothreonine. Lys-174 carries the N6-acetyllysine modification. The DEAD box signature appears at Asp-182–Asp-185. The residue at position 193 (Lys-193) is an N6-acetyllysine. A Glycyl lysine isopeptide (Lys-Gly) (interchain with G-Cter in SUMO2) cross-link involves residue Lys-225. Lys-238 is subject to N6-acetyllysine; alternate. Residue Lys-238 forms a Glycyl lysine isopeptide (Lys-Gly) (interchain with G-Cter in SUMO2); alternate linkage. A Helicase C-terminal domain is found at Gly-245 to Ile-406. Residues Lys-309, Lys-369, and Lys-381 each participate in a glycyl lysine isopeptide (Lys-Gly) (interchain with G-Cter in SUMO2) cross-link.

This sequence belongs to the DEAD box helicase family. eIF4A subfamily. EIF4F is a multi-subunit complex, the composition of which varies with external and internal environmental conditions. It is composed of at least EIF4A, EIF4E and EIF4G1/EIF4G3. Interacts with PAIP1, EIF4E and UPF2. Found in a complex with XPO7, EIF4A1, ARHGAP1, VPS26A, VPS29, VPS35 and SFN. May interact with NOM1. Interacts with PDCD4; this interferes with the interaction between EIF4A and EIF4G. Interacts with RBM4. Interacts with DDX3X in an RNA-independent manner. Interacts with PKP1 (via N-terminus); the interaction promotes EIF4A1 recruitment to the cap-dependent translation complex and EIF4A1 ATPase activity.

The protein resides in the cytoplasm. It is found in the perinuclear region. The protein localises to the cell membrane. Its subcellular location is the stress granule. The catalysed reaction is ATP + H2O = ADP + phosphate + H(+). Its function is as follows. ATP-dependent RNA helicase which is a subunit of the eIF4F complex involved in cap recognition and is required for mRNA binding to ribosome. In the current model of translation initiation, eIF4A unwinds RNA secondary structures in the 5'-UTR of mRNAs which is necessary to allow efficient binding of the small ribosomal subunit, and subsequent scanning for the initiator codon. As a result, promotes cell proliferation and growth. This chain is Eukaryotic initiation factor 4A-I (EIF4A1), found in Bos taurus (Bovine).